The primary structure comprises 732 residues: Elongation factor 2 (732 aa).

The 210-residue stretch at 19–228 (ELVRNIGIVA…TKITFKDIVE (210 aa)) folds into the tr-type G domain. Residues 28 to 35 (AHIDHGKT), 94 to 98 (DTPGH), and 148 to 151 (NKID) contribute to the GTP site. A Diphthamide modification is found at His-598.

Belongs to the TRAFAC class translation factor GTPase superfamily. Classic translation factor GTPase family. EF-G/EF-2 subfamily.

Its subcellular location is the cytoplasm. In terms of biological role, catalyzes the GTP-dependent ribosomal translocation step during translation elongation. During this step, the ribosome changes from the pre-translocational (PRE) to the post-translocational (POST) state as the newly formed A-site-bound peptidyl-tRNA and P-site-bound deacylated tRNA move to the P and E sites, respectively. Catalyzes the coordinated movement of the two tRNA molecules, the mRNA and conformational changes in the ribosome. In Thermoplasma volcanium (strain ATCC 51530 / DSM 4299 / JCM 9571 / NBRC 15438 / GSS1), this protein is Elongation factor 2.